The sequence spans 455 residues: Exodeoxyribonuclease 7 large subunit (455 aa).

The protein belongs to the XseA family. In terms of assembly, heterooligomer composed of large and small subunits.

The protein resides in the cytoplasm. It catalyses the reaction Exonucleolytic cleavage in either 5'- to 3'- or 3'- to 5'-direction to yield nucleoside 5'-phosphates.. Bidirectionally degrades single-stranded DNA into large acid-insoluble oligonucleotides, which are then degraded further into small acid-soluble oligonucleotides. This Escherichia coli (strain SMS-3-5 / SECEC) protein is Exodeoxyribonuclease 7 large subunit.